The sequence spans 411 residues: Adenylosuccinate synthetase (411 aa).

GTP-binding positions include 11 to 17 (GDEGKGK) and 39 to 41 (GHT). D12 (proton acceptor) is an active-site residue. The Mg(2+) site is built by D12 and G39. IMP is bound by residues 12-15 (DEGK), 37-40 (NAGH), T121, R135, Q215, T230, and R294. Residue H40 is the Proton donor of the active site. 290 to 296 (TTTKRPR) contacts substrate. GTP is bound by residues R296, 322 to 324 (KLD), and 400 to 402 (STS).

The protein belongs to the adenylosuccinate synthetase family. As to quaternary structure, homodimer. The cofactor is Mg(2+).

Its subcellular location is the cytoplasm. It carries out the reaction IMP + L-aspartate + GTP = N(6)-(1,2-dicarboxyethyl)-AMP + GDP + phosphate + 2 H(+). It participates in purine metabolism; AMP biosynthesis via de novo pathway; AMP from IMP: step 1/2. Functionally, plays an important role in the de novo pathway of purine nucleotide biosynthesis. Catalyzes the first committed step in the biosynthesis of AMP from IMP. The chain is Adenylosuccinate synthetase from Helicobacter pylori (strain J99 / ATCC 700824) (Campylobacter pylori J99).